A 209-amino-acid chain; its full sequence is NADH-quinone oxidoreductase subunit C (209 aa).

This sequence belongs to the complex I 30 kDa subunit family. As to quaternary structure, NDH-1 is composed of 14 different subunits. Subunits NuoB, C, D, E, F, and G constitute the peripheral sector of the complex.

It is found in the cell inner membrane. The enzyme catalyses a quinone + NADH + 5 H(+)(in) = a quinol + NAD(+) + 4 H(+)(out). NDH-1 shuttles electrons from NADH, via FMN and iron-sulfur (Fe-S) centers, to quinones in the respiratory chain. The immediate electron acceptor for the enzyme in this species is believed to be ubiquinone. Couples the redox reaction to proton translocation (for every two electrons transferred, four hydrogen ions are translocated across the cytoplasmic membrane), and thus conserves the redox energy in a proton gradient. The polypeptide is NADH-quinone oxidoreductase subunit C (Xanthobacter autotrophicus (strain ATCC BAA-1158 / Py2)).